The primary structure comprises 355 residues: Vacuolar protein sorting-associated protein 37C (355 aa).

Position 29 is a phosphoserine (S29). Positions 78–167 (VERCQEQKAK…RKPRASQELA (90 aa)) constitute a VPS37 C-terminal domain. A disordered region spans residues 159-355 (KPRASQELAG…PPPGPAWPGY (197 aa)). Composition is skewed to pro residues over residues 170–186 (APPPRPPPPVRPVPQGT) and 194–214 (PQPPLAMPPYPLPYSPSPSLP). Positions 291–304 (APSPGYPQQSPYPA) are enriched in low complexity. Over residues 321–355 (PGQPQPSVPLQPPYPPGPAPPYGFPPPPGPAWPGY) the composition is skewed to pro residues.

It belongs to the VPS37 family. Component of the ESCRT-I complex (endosomal sorting complex required for transport I) which consists of TSG101, VPS28, a VPS37 protein (VPS37A to -D) and MVB12A or MVB12B in a 1:1:1:1 stoichiometry. Interacts with TSG101, VPS28, MVB12A and MVB12B. Component of the ESCRT-I complex (endosomal sorting complex required for transport I) which consists of TSG101, VPS28, a VPS37 protein (VPS37A to -D) and UBAP1 in a 1:1:1:1 stoichiometry. Interacts with HGS and STAM2. Interacts with CEP55. Phosphorylated by TBK1.

It localises to the late endosome membrane. In terms of biological role, component of the ESCRT-I complex, a regulator of vesicular trafficking process. Required for the sorting of endocytic ubiquitinated cargos into multivesicular bodies. May be involved in cell growth and differentiation. This is Vacuolar protein sorting-associated protein 37C (VPS37C) from Homo sapiens (Human).